Here is a 458-residue protein sequence, read N- to C-terminus: Serine protease HTRA2, mitochondrial (458 aa).

A mitochondrion-targeting transit peptide spans 1–31 (MAALRAGRGAGWSLRGWRALWGGRWGKGPLL). Positions 32 to 133 (TPDLRALLTS…GGRGPPAVLA (102 aa)) are excised as a propeptide. A helical transmembrane segment spans residues 105–125 (VWLAVALGAGGAVLLLFWGGG). The IAP-binding motif motif lies at 134-137 (SVLG). A serine protease region spans residues 166-342 (ILGRHPFSGR…IPSDRLREFL (177 aa)). Catalysis depends on charge relay system residues His198, Asp228, and Ser306. Positions 364–445 (VMMLTLTPSI…QLAVRIRRGQ (82 aa)) constitute a PDZ domain.

This sequence belongs to the peptidase S1C family. Homotrimer. Interacts with MXI2. Interacts with THAP5 under apoptotic conditions. The mature protein, but not the precursor, binds to BIRC2/c-IAP1, BIRC3/c-IAP2 and XIAP/BIRC4. Interacts with BIRC6/bruce. Interacts with AREL1 (via HECT domain); in the cytoplasm following induction of apoptosis. In terms of processing, ubiquitinated by BIRC6; this activity is inhibited by DIABLO/SMAC. Post-translationally, autoproteolytically activated.

It is found in the mitochondrion intermembrane space. It localises to the mitochondrion membrane. The enzyme catalyses Cleavage of non-polar aliphatic amino-acids at the P1 position, with a preference for Val, Ile and Met. At the P2 and P3 positions, Arg is selected most strongly with a secondary preference for other hydrophilic residues.. With respect to regulation, inhibited by BIRC6. Functionally, serine protease that shows proteolytic activity against a non-specific substrate beta-casein. Promotes apoptosis by either relieving the inhibition of BIRC proteins on caspases, leading to an increase in caspase activity; or by a BIRC inhibition-independent, caspase-independent and serine protease activity-dependent mechanism. Cleaves BIRC6 and relieves its inhibition on CASP3, CASP7 and CASP9, but it is also prone to inhibition by BIRC6. Cleaves THAP5 and promotes its degradation during apoptosis. The protein is Serine protease HTRA2, mitochondrial (HTRA2) of Bos taurus (Bovine).